Consider the following 847-residue polypeptide: Beta-hexosaminidase (847 aa).

Cystine bridges form between Cys-31–Cys-40, Cys-377–Cys-385, and Cys-484–Cys-530. The Proton donor role is filled by Glu-519.

The protein belongs to the glycosyl hydrolase 20 family.

It catalyses the reaction Hydrolysis of terminal non-reducing N-acetyl-D-hexosamine residues in N-acetyl-beta-D-hexosaminides.. It participates in glycan degradation; chitin degradation. Its function is as follows. Hydrolysis of terminal, non-reducing N-acetyl-beta-D-glucosamine residues in chitobiose and higher analogs, and in glycoproteins. In Vibrio vulnificus, this protein is Beta-hexosaminidase (hex).